A 673-amino-acid polypeptide reads, in one-letter code: UvrABC system protein B (673 aa).

The 387-residue stretch at Ala-28 to Leu-414 folds into the Helicase ATP-binding domain. Residue Gly-41 to Thr-48 participates in ATP binding. Residues Tyr-94 to Ile-117 carry the Beta-hairpin motif. The Helicase C-terminal domain occupies Gln-433 to Ile-595. A UVR domain is found at Arg-633–Ile-668.

Belongs to the UvrB family. In terms of assembly, forms a heterotetramer with UvrA during the search for lesions. Interacts with UvrC in an incision complex.

It is found in the cytoplasm. In terms of biological role, the UvrABC repair system catalyzes the recognition and processing of DNA lesions. A damage recognition complex composed of 2 UvrA and 2 UvrB subunits scans DNA for abnormalities. Upon binding of the UvrA(2)B(2) complex to a putative damaged site, the DNA wraps around one UvrB monomer. DNA wrap is dependent on ATP binding by UvrB and probably causes local melting of the DNA helix, facilitating insertion of UvrB beta-hairpin between the DNA strands. Then UvrB probes one DNA strand for the presence of a lesion. If a lesion is found the UvrA subunits dissociate and the UvrB-DNA preincision complex is formed. This complex is subsequently bound by UvrC and the second UvrB is released. If no lesion is found, the DNA wraps around the other UvrB subunit that will check the other stand for damage. The protein is UvrABC system protein B of Protochlamydia amoebophila (strain UWE25).